The primary structure comprises 636 residues: Iron transport multicopper oxidase FET3 (636 aa).

A signal peptide spans 1–21 (MTNALLSIAVLLFSMLSLAQA). Residues 22–559 (ETHTFNWTTG…AFIPTGFTKK (538 aa)) are Extracellular-facing. 3 N-linked (GlcNAc...) asparagine glycosylation sites follow: Asn27, Asn74, and Asn77. Plastocyanin-like domains follow at residues 32–146 (WDYR…IKDD) and 157–301 (SLSL…VYNK). Cu cation-binding residues include His81 and His83. Asn88 and Asn113 each carry an N-linked (GlcNAc...) asparagine glycan. Residues His126 and His128 each coordinate Cu cation. Residues Asn194, Asn198, Asn244, Asn265, Asn292, Asn300, Asn359, and Asn381 are each glycosylated (N-linked (GlcNAc...) asparagine). A Plastocyanin-like 3 domain is found at 362–502 (YTAPKVPTLM…GLGLVLVEDP (141 aa)). Residues His413, His416, His418, His483, Cys484, His485, and His489 each coordinate Cu cation. The helical transmembrane segment at 560 to 584 (GIIAMTFSCFAGILGIITIAIYGMM) threads the bilayer. Residues 585–636 (DMEDATEKVIRDLHVDPEVLLNEVDENEERQVNEDRHSTEKHQFLTKAKRFF) are Cytoplasmic-facing.

Belongs to the multicopper oxidase family. The cofactor is Cu cation.

Its subcellular location is the cell membrane. It carries out the reaction 4 Fe(2+) + O2 + 4 H(+) = 4 Fe(3+) + 2 H2O. It catalyses the reaction 4 Cu(+) + O2 + 4 H(+) = 4 Cu(2+) + 2 H2O. Functionally, iron transport multicopper ferroxidase required for Fe(2+) ion high affinity uptake. Required to oxidize Fe(2+) to Fe(3+), which is then transported into the cell via the ferric iron permease FTR1. Essential component of copper-dependent iron transport. Also has cuprous oxidase activity. This chain is Iron transport multicopper oxidase FET3 (FET3), found in Saccharomyces cerevisiae (strain ATCC 204508 / S288c) (Baker's yeast).